Consider the following 84-residue polypeptide: U-actitoxin-Avd8e (84 aa).

An N-terminal signal peptide occupies residues 1–22 (MASARTLVLLLIGAVLMCQVSA). A propeptide spanning residues 23 to 41 (DSELLNEILAAHMEEDMPE) is cleaved from the precursor. One can recognise a ShKT domain in the interval 44–84 (CIDRYRSNICGSVIRPLDCTRRKSRMGRFARTNCKKLCGFC). 3 cysteine pairs are disulfide-bonded: Cys-44–Cys-84, Cys-53–Cys-77, and Cys-62–Cys-81.

This sequence belongs to the sea anemone 8 toxin family.

It is found in the secreted. The protein resides in the nematocyst. This chain is U-actitoxin-Avd8e, found in Anemonia viridis (Snakelocks anemone).